Consider the following 133-residue polypeptide: uncharacterized protein (133 aa).

In terms of domain architecture, HIT spans 3-106 (IFTKIINREL…PTRSLSDFGF (104 aa)). Positions 90 to 94 (HLHIH) match the Histidine triad motif motif.

This is an uncharacterized protein from Mycobacterium tuberculosis (strain ATCC 25618 / H37Rv).